The chain runs to 501 residues: Sucrose transport protein SUT2 (501 aa).

At 1 to 31 (MPRRPSGGGGGAGPAAAAVRKVPLRKLLRAA) the chain is on the cytoplasmic side. A helical transmembrane segment spans residues 32 to 52 (SVACGVQFGWALQLSLLTPYV). The Extracellular portion of the chain corresponds to 53–55 (QEL). The helical transmembrane segment at 56–76 (GIPHAFASLVWLCGPLSGLLV) threads the bilayer. The Cytoplasmic portion of the chain corresponds to 77–98 (QPLVGHLSDRIAPAASPLGRRR). Residues 99 to 119 (PFIAAGAASIAAAVLTVGFSA) form a helical membrane-spanning segment. Residues 120 to 135 (DLGRIFGDSITPGSTR) lie on the Extracellular side of the membrane. The chain crosses the membrane as a helical span at residues 136–156 (LGAIIVYLVGFWLLDVGNNAT). Residues 157–176 (QGPCRAFLADLTENDPRRTR) are Cytoplasmic-facing. Residues 177–197 (IANAYFSLFMALGNILGYATG) traverse the membrane as a helical segment. Residues 198–222 (AYSGWYKIFPFTVTPSCSISCANLK) are Extracellular-facing. The chain crosses the membrane as a helical span at residues 223 to 243 (SAFLLDIIILVVTTCITVASV). Over 244-278 (QEPQSFGSDEADHPSTEQEAFLWELFGSFRYFTLP) the chain is Cytoplasmic. The chain crosses the membrane as a helical span at residues 279-299 (VWMVLIVTALTWIGWFPFILF). The Extracellular portion of the chain corresponds to 300 to 327 (DTDWMGREIYRGSPDDPSITQSYHDGVR). Residues 328–348 (MGSFGLMLNSVLLGFTSIVLE) form a helical membrane-spanning segment. The Cytoplasmic segment spans residues 349-356 (KLCRKWGA). The helical transmembrane segment at 357-377 (GLVWGVSNILMALCFVAMLVI) threads the bilayer. Over 378 to 394 (TYVAKNMDYPPSGVPPT) the chain is Extracellular. The chain crosses the membrane as a helical span at residues 395-415 (GIVIASLVVFTILGAPLAITY). At 416–433 (SIPYAMAASRVENLGLGQ) the chain is on the cytoplasmic side. Residues 434 to 454 (GLAMGILNLAIVIPQVIVSLG) traverse the membrane as a helical segment. Over 455–467 (SGPWDQLFGGGNA) the chain is Extracellular. Residues 468–488 (PAFAVAAAASFIGGLVAILGL) traverse the membrane as a helical segment. At 489 to 501 (PRARIASRRRGHR) the chain is on the cytoplasmic side.

This sequence belongs to the glycoside-pentoside-hexuronide (GPH) cation symporter transporter (TC 2.A.2.4) family. Homodimer. Widely expressed.

The protein localises to the cell membrane. It functions in the pathway glycan biosynthesis; sucrose metabolism. In terms of biological role, responsible for the transport of sucrose into the cell, with the concomitant uptake of protons (symport system). May also transport other glucosides. The chain is Sucrose transport protein SUT2 (SUT2) from Oryza sativa subsp. japonica (Rice).